Reading from the N-terminus, the 192-residue chain is uncharacterized protein (192 aa).

The first 18 residues, 1 to 18 (MNSKFILKYFILAFFLVS), serve as a signal peptide directing secretion. A lipid anchor (N-palmitoyl cysteine) is attached at C19. C19 is lipidated: S-diacylglycerol cysteine.

Its subcellular location is the cell membrane. This is an uncharacterized protein from Borreliella burgdorferi (strain ATCC 35210 / DSM 4680 / CIP 102532 / B31) (Borrelia burgdorferi).